The primary structure comprises 192 residues: Casparian strip membrane protein 4 (192 aa).

Over 1 to 29 (MTKDVVIEHGESSKAPLVPAPVAAGVGRA) the chain is Cytoplasmic. A helical transmembrane segment spans residues 30-50 (VSIADVFLRFLSIVATIASAI). The Extracellular portion of the chain corresponds to 51 to 79 (SMGTTNETLPFFTQFIQFEAKYSDLPSFT). An N-linked (GlcNAc...) asparagine glycan is attached at N56. A helical transmembrane segment spans residues 80 to 100 (FFVAANAVVCTYLVLSIPLSI). Topologically, residues 101 to 112 (VHIIRPRARYSR) are cytoplasmic. Residues 113 to 133 (LILVFFDAVMLALLTAGASAA) traverse the membrane as a helical segment. The Extracellular portion of the chain corresponds to 134–166 (AAIVYLAHKGNVRANWFAICQQFDSFCERISGS). A helical transmembrane segment spans residues 167–187 (LIGSFAAMVLLIVLIFLSAFA). The Cytoplasmic segment spans residues 188–192 (LARRH).

It belongs to the Casparian strip membrane proteins (CASP) family. As to quaternary structure, homodimer and heterodimers.

The protein resides in the cell membrane. In terms of biological role, regulates membrane-cell wall junctions and localized cell wall deposition. Required for establishment of the Casparian strip membrane domain (CSD) and the subsequent formation of Casparian strips, a cell wall modification of the root endodermis that determines an apoplastic barrier between the intraorganismal apoplasm and the extraorganismal apoplasm and prevents lateral diffusion. The polypeptide is Casparian strip membrane protein 4 (Sorghum bicolor (Sorghum)).